Consider the following 610-residue polypeptide: UvrABC system protein C (610 aa).

A GIY-YIG domain is found at 16-94 (HQPGVYRMYN…IKQYLPKYNV (79 aa)). The 36-residue stretch at 204 to 239 (QQVLKQLIEKMEVASQQLRFEDAAKFRDQIQAIRRV) folds into the UVR domain.

It belongs to the UvrC family. In terms of assembly, interacts with UvrB in an incision complex.

It is found in the cytoplasm. Functionally, the UvrABC repair system catalyzes the recognition and processing of DNA lesions. UvrC both incises the 5' and 3' sides of the lesion. The N-terminal half is responsible for the 3' incision and the C-terminal half is responsible for the 5' incision. The sequence is that of UvrABC system protein C from Vibrio parahaemolyticus serotype O3:K6 (strain RIMD 2210633).